The following is a 199-amino-acid chain: Dephospho-CoA kinase (199 aa).

The region spanning 4–199 (VIGLTGGIAS…DNVLQKWNIS (196 aa)) is the DPCK domain. Position 12–17 (12–17 (ASGKST)) interacts with ATP.

Belongs to the CoaE family.

It is found in the cytoplasm. It catalyses the reaction 3'-dephospho-CoA + ATP = ADP + CoA + H(+). It functions in the pathway cofactor biosynthesis; coenzyme A biosynthesis; CoA from (R)-pantothenate: step 5/5. In terms of biological role, catalyzes the phosphorylation of the 3'-hydroxyl group of dephosphocoenzyme A to form coenzyme A. The polypeptide is Dephospho-CoA kinase (Oceanobacillus iheyensis (strain DSM 14371 / CIP 107618 / JCM 11309 / KCTC 3954 / HTE831)).